The chain runs to 134 residues: MNTTLFRWPVRVYYEDTDAGGVVYHASYVAFYERARTEMLRHHHFSQQALMAERVAFVVRKMTVEYYAPARLDDMLEIQTEITSMRGTSLVFTQRIVNAENTLLNEAEVLVVCVDPLKMKPRALPKSIVAEFKQ.

Residue Asp-18 is part of the active site.

Belongs to the 4-hydroxybenzoyl-CoA thioesterase family.

The protein localises to the cell inner membrane. Its function is as follows. Thioesterase that appears to be involved in phospholipid metabolism. Some specific acyl-ACPs could be physiological substrates. Displays acyl-CoA thioesterase activity on malonyl-CoA in vitro, catalyzing the hydrolysis of the thioester bond. In Escherichia coli O157:H7, this protein is Acyl-CoA thioester hydrolase YbgC (ybgC).